Consider the following 408-residue polypeptide: Ribosomal RNA large subunit methyltransferase DR_0049 (408 aa).

It belongs to the methyltransferase superfamily.

It catalyses the reaction cytidine(2499) in 23S rRNA + S-adenosyl-L-methionine = 5-methylcytidine(2499) in 23S rRNA + S-adenosyl-L-homocysteine + H(+). In terms of biological role, specifically methylates the cytosine at position 2499 (m5C2499) of 23S rRNA. In Deinococcus radiodurans (strain ATCC 13939 / DSM 20539 / JCM 16871 / CCUG 27074 / LMG 4051 / NBRC 15346 / NCIMB 9279 / VKM B-1422 / R1), this protein is Ribosomal RNA large subunit methyltransferase DR_0049.